The sequence spans 124 residues: Hydrogenase maturation factor HypA (124 aa).

Histidine 2 is a Ni(2+) binding site. Zn(2+) is bound by residues cysteine 78, cysteine 81, cysteine 97, and cysteine 100.

It belongs to the HypA/HybF family.

Involved in the maturation of [NiFe] hydrogenases. Required for nickel insertion into the metal center of the hydrogenase. This chain is Hydrogenase maturation factor HypA, found in Methanococcus vannielii (strain ATCC 35089 / DSM 1224 / JCM 13029 / OCM 148 / SB).